Consider the following 505-residue polypeptide: Deoxyguanosinetriphosphate triphosphohydrolase (505 aa).

Positions 66 to 273 (RLTHSMEVQQ…MEAADDISYC (208 aa)) constitute an HD domain.

Belongs to the dGTPase family. Type 1 subfamily. Homotetramer. The cofactor is Mg(2+).

The catalysed reaction is dGTP + H2O = 2'-deoxyguanosine + triphosphate + H(+). DGTPase preferentially hydrolyzes dGTP over the other canonical NTPs. This is Deoxyguanosinetriphosphate triphosphohydrolase from Shigella boydii serotype 18 (strain CDC 3083-94 / BS512).